The primary structure comprises 154 residues: Myoglobin (154 aa).

The Globin domain occupies 2–148; the sequence is GLSDGEWQLV…FRNDIAAKYK (147 aa). Ser-4 is subject to Phosphoserine. His-65 serves as a coordination point for nitrite. Residue His-65 coordinates O2. Thr-68 carries the phosphothreonine modification. Residue His-94 participates in heme b binding.

The protein belongs to the globin family. As to quaternary structure, monomeric.

The protein resides in the cytoplasm. It localises to the sarcoplasm. It catalyses the reaction Fe(III)-heme b-[protein] + nitric oxide + H2O = Fe(II)-heme b-[protein] + nitrite + 2 H(+). The enzyme catalyses H2O2 + AH2 = A + 2 H2O. In terms of biological role, monomeric heme protein which primary function is to store oxygen and facilitate its diffusion within muscle tissues. Reversibly binds oxygen through a pentacoordinated heme iron and enables its timely and efficient release as needed during periods of heightened demand. Depending on the oxidative conditions of tissues and cells, and in addition to its ability to bind oxygen, it also has a nitrite reductase activity whereby it regulates the production of bioactive nitric oxide. Under stress conditions, like hypoxia and anoxia, it also protects cells against reactive oxygen species thanks to its pseudoperoxidase activity. In Ondatra zibethicus (Muskrat), this protein is Myoglobin (MB).